A 151-amino-acid polypeptide reads, in one-letter code: Ribosome maturation factor RimP (151 aa).

This sequence belongs to the RimP family.

It localises to the cytoplasm. Its function is as follows. Required for maturation of 30S ribosomal subunits. The sequence is that of Ribosome maturation factor RimP from Thermoanaerobacter sp. (strain X514).